The sequence spans 22 residues: Brain peptide MVPVPVHHMADELLRNGPDTVI (22 aa).

The polypeptide is Brain peptide MVPVPVHHMADELLRNGPDTVI (Apis mellifera (Honeybee)).